A 181-amino-acid chain; its full sequence is Caltractin ICL1d (181 aa).

The segment at 1 to 29 (MARRGQQPPPQQAPPAQKNQTGKFNPAEF) is disordered. 4 consecutive EF-hand domains span residues 37-72 (EEVLEIKEAFDLFDTDGTQSIDPKELKAAMTSLGFE), 73-108 (AKNQTIYQMISDLDTDGSGQIDFAEFLKLMTARISE), 110-145 (DSKADIQKVFNLFDSERAGVITLKDLRKVAKELGET), and 146-181 (MDDSELQEMIDRADSDGDAQVTFEDFYNIMTKKTFA). Ca(2+) is bound by residues Asp-50, Asp-52, Thr-54, Ser-56, Glu-61, Asp-86, Asp-88, Ser-90, Gln-92, and Glu-97.

The protein belongs to the centrin family. In terms of assembly, monomer.

It localises to the cytoplasm. Its subcellular location is the cytoskeleton. In terms of biological role, plays a fundamental role in microtubule organizing center structure and function. Component of the infraciliary lattice (ICL) and the ciliary basal bodies. The protein is Caltractin ICL1d (Icl1d) of Paramecium tetraurelia.